The following is a 497-amino-acid chain: Aspartyl/glutamyl-tRNA(Asn/Gln) amidotransferase subunit B (497 aa).

It belongs to the GatB/GatE family. GatB subfamily. Heterotrimer of A, B and C subunits.

The enzyme catalyses L-glutamyl-tRNA(Gln) + L-glutamine + ATP + H2O = L-glutaminyl-tRNA(Gln) + L-glutamate + ADP + phosphate + H(+). The catalysed reaction is L-aspartyl-tRNA(Asn) + L-glutamine + ATP + H2O = L-asparaginyl-tRNA(Asn) + L-glutamate + ADP + phosphate + 2 H(+). Functionally, allows the formation of correctly charged Asn-tRNA(Asn) or Gln-tRNA(Gln) through the transamidation of misacylated Asp-tRNA(Asn) or Glu-tRNA(Gln) in organisms which lack either or both of asparaginyl-tRNA or glutaminyl-tRNA synthetases. The reaction takes place in the presence of glutamine and ATP through an activated phospho-Asp-tRNA(Asn) or phospho-Glu-tRNA(Gln). This Rhodopirellula baltica (strain DSM 10527 / NCIMB 13988 / SH1) protein is Aspartyl/glutamyl-tRNA(Asn/Gln) amidotransferase subunit B.